Reading from the N-terminus, the 137-residue chain is Large ribosomal subunit protein uL16 (137 aa).

Belongs to the universal ribosomal protein uL16 family. As to quaternary structure, part of the 50S ribosomal subunit.

In terms of biological role, binds 23S rRNA and is also seen to make contacts with the A and possibly P site tRNAs. This Leuconostoc mesenteroides subsp. mesenteroides (strain ATCC 8293 / DSM 20343 / BCRC 11652 / CCM 1803 / JCM 6124 / NCDO 523 / NBRC 100496 / NCIMB 8023 / NCTC 12954 / NRRL B-1118 / 37Y) protein is Large ribosomal subunit protein uL16.